Consider the following 381-residue polypeptide: GDSL esterase/lipase At3g48460 (381 aa).

The signal sequence occupies residues 1–26 (MSSSISPLLTTAISVAILLFSTISTA). Catalysis depends on Ser-45, which acts as the Nucleophile. Asn-112, Asn-140, and Asn-258 each carry an N-linked (GlcNAc...) asparagine glycan. Catalysis depends on residues Asp-344 and His-347.

It belongs to the 'GDSL' lipolytic enzyme family.

It is found in the secreted. This is GDSL esterase/lipase At3g48460 from Arabidopsis thaliana (Mouse-ear cress).